A 491-amino-acid chain; its full sequence is Regulatory protein NPR5 (491 aa).

Residues 26–116 form the BTB domain; that stretch reads SDVTFSVEGR…LYSGQVSIVP (91 aa). Residues 122-136 form a C2HC NPR-type zinc finger; it reads RPNCGERGCWHTHCS. Positions 125, 130, 132, and 135 each coordinate Zn(2+). ANK repeat units follow at residues 254–283, 284–313, 318–347, and 351–385; these read QKIR…LNLD, ESLA…DVNY, AGKT…DPNV, and GGIT…KLRL. Residues 400 to 491 form a disordered region; sequence EEGNNSNNQN…MYHHHHQHHF (92 aa). Residues 403 to 413 are compositionally biased toward low complexity; it reads NNSNNQNNDNN. Residues 457–470 show a composition bias toward basic and acidic residues; that stretch reads DQGDDHNSQREGMS.

The protein belongs to the plant 'ANKYRIN-BTB/POZ' family. 'NOOT-BOP-COCH-like' (NBCL) subfamily. In terms of assembly, homodimer or heterodimer with BOP1. Interacts with PAN. In terms of tissue distribution, highly expressed in young floral meristem. Predominantly expressed in the boundary between floral meristem (FM) and sepal primordia.

Its subcellular location is the cytoplasm. It is found in the nucleus. It participates in protein modification; protein ubiquitination. Functionally, may act as a substrate-specific adapter of an E3 ubiquitin-protein ligase complex (CUL3-RBX1-BTB) which mediates the ubiquitination and subsequent proteasomal degradation of target proteins. Acts redundantly with BOP2. BOP1/2 promote leaf and floral meristem fate and determinacy in a pathway targeting AP1 and AGL24. BOP1/2 act as transcriptional co-regulators through direct interaction with TGA factors, including PAN, a direct regulator of AP1. Controls lateral organ fate through positive regulation of adaxial-abaxial polarity genes ATHB-14/PHB, YAB1/FIL and YAB3, and through positive regulation of LOB domain-containing genes LOB, LBD6/AS2 and LBD36. Promotes and maintains a developmentally determinate state in leaf cells through the negative regulation of JAG, JGL and class I KNOX genes. Is also involved in nectary development, formation of normal abscission zones (AZs) and suppression of bract formation, probably by regulating the cell wall disorganization. The sequence is that of Regulatory protein NPR5 from Arabidopsis thaliana (Mouse-ear cress).